The following is a 516-amino-acid chain: Lysophosphatidylcholine acyltransferase 2B (516 aa).

Residue N28 is glycosylated (N-linked (GlcNAc...) asparagine). 3 consecutive transmembrane segments (helical) span residues T44–V64, C68–P88, and L102–V122. The short motif at H142–D147 is the HXXXXD motif element. EF-hand domains lie at P387 to P422 and N424 to V459. Positions 400, 402, 404, 406, 411, 437, 439, 441, 443, and 448 each coordinate Ca(2+).

It belongs to the 1-acyl-sn-glycerol-3-phosphate acyltransferase family.

It localises to the membrane. Its pathway is lipid metabolism; phospholipid metabolism. Functionally, probable acetyltransferase. This Mus musculus (Mouse) protein is Lysophosphatidylcholine acyltransferase 2B (Lpcat2b).